We begin with the raw amino-acid sequence, 452 residues long: tRNA-2-methylthio-N(6)-dimethylallyladenosine synthase (452 aa).

The MTTase N-terminal domain occupies 5 to 121; sequence RRYHITTFGC…LADLLAQVEA (117 aa). Cys-14, Cys-50, Cys-84, Cys-156, Cys-160, and Cys-163 together coordinate [4Fe-4S] cluster. In terms of domain architecture, Radical SAM core spans 142 to 379; the sequence is RDSTITAWVN…NHLVAQMAAD (238 aa). The TRAM domain maps to 382–446; it reads QRYLGRTEEV…AFSLTGQILS (65 aa).

It belongs to the methylthiotransferase family. MiaB subfamily. Monomer. [4Fe-4S] cluster is required as a cofactor.

The protein resides in the cytoplasm. It carries out the reaction N(6)-dimethylallyladenosine(37) in tRNA + (sulfur carrier)-SH + AH2 + 2 S-adenosyl-L-methionine = 2-methylsulfanyl-N(6)-dimethylallyladenosine(37) in tRNA + (sulfur carrier)-H + 5'-deoxyadenosine + L-methionine + A + S-adenosyl-L-homocysteine + 2 H(+). Catalyzes the methylthiolation of N6-(dimethylallyl)adenosine (i(6)A), leading to the formation of 2-methylthio-N6-(dimethylallyl)adenosine (ms(2)i(6)A) at position 37 in tRNAs that read codons beginning with uridine. This is tRNA-2-methylthio-N(6)-dimethylallyladenosine synthase from Synechococcus elongatus (strain ATCC 33912 / PCC 7942 / FACHB-805) (Anacystis nidulans R2).